A 256-amino-acid chain; its full sequence is UPF0246 protein HRM2_41860 (256 aa).

The protein belongs to the UPF0246 family.

In Desulforapulum autotrophicum (strain ATCC 43914 / DSM 3382 / VKM B-1955 / HRM2) (Desulfobacterium autotrophicum), this protein is UPF0246 protein HRM2_41860.